The sequence spans 268 residues: Tryptophan synthase alpha chain (268 aa).

Active-site proton acceptor residues include E49 and D60.

This sequence belongs to the TrpA family. As to quaternary structure, tetramer of two alpha and two beta chains.

It catalyses the reaction (1S,2R)-1-C-(indol-3-yl)glycerol 3-phosphate + L-serine = D-glyceraldehyde 3-phosphate + L-tryptophan + H2O. The protein operates within amino-acid biosynthesis; L-tryptophan biosynthesis; L-tryptophan from chorismate: step 5/5. Functionally, the alpha subunit is responsible for the aldol cleavage of indoleglycerol phosphate to indole and glyceraldehyde 3-phosphate. The sequence is that of Tryptophan synthase alpha chain from Aeromonas salmonicida (strain A449).